The sequence spans 1567 residues: Transmembrane protein 131 homolog (1567 aa).

Residues 1–32 (MPTQVQMRPLLRIFAEPILLILIFLFTLGAKG) form the signal peptide. Residues 33 to 1049 (EKVLQETFLG…RPGWESSLKN (1017 aa)) are Lumenal-facing. A papD-L domain region spans residues 55–228 (RLVPSRLDFG…TLKPVIRISF (174 aa)). Asparagine 84, asparagine 114, asparagine 168, asparagine 235, asparagine 316, asparagine 317, asparagine 342, asparagine 372, asparagine 409, asparagine 462, asparagine 563, asparagine 890, and asparagine 1013 each carry an N-linked (GlcNAc...) asparagine glycan. Residues 1050 to 1070 (AALVVLLASFGLVLVAAVFDA) traverse the membrane as a helical segment. Topologically, residues 1071–1567 (KAIMVQQNAY…SQRNNHNHMN (497 aa)) are cytoplasmic. Residues 1096 to 1130 (RNIVKLQAEEAAAKAESVQQQQKVKNGQLKELRKR) are a coiled coil. 3 disordered regions span residues 1112-1337 (SVQQ…SPDA), 1364-1386 (PTDN…IGDN), and 1502-1567 (PGLE…NHMN). 2 stretches are compositionally biased toward low complexity: residues 1132–1150 (VVNS…SPWS) and 1166–1183 (KTVV…APAA). Phosphoserine is present on residues serine 1201 and serine 1258. Over residues 1247–1259 (AKSSPPQQENISP) the composition is skewed to polar residues. The segment covering 1284–1298 (PGRERERERRSKDQK) has biased composition (basic and acidic residues). The segment covering 1319 to 1331 (KLNFGQTTNSTSP) has biased composition (polar residues). Polar residues-rich tracts occupy residues 1507 to 1519 (SARQ…QEQV) and 1536 to 1561 (LPTQ…SQRN).

It belongs to the TMEM131 family. As to quaternary structure, may interact (via PapD-L domain) with collagen proteins (via C-terminus); the interaction is direct and is involved in assembly and TRAPPIII ER-to-Golgi transport complex-dependent secretion of collagen.

The protein localises to the membrane. Collagen binding transmembrane protein involved in collagen secretion, probably by recruiting the ER-to-Golgi transport complex TRAPPIII. The chain is Transmembrane protein 131 homolog from Drosophila melanogaster (Fruit fly).